We begin with the raw amino-acid sequence, 270 residues long: ATP synthase subunit a (270 aa).

A run of 5 helical transmembrane segments spans residues 38 to 58, 98 to 118, 143 to 163, 208 to 228, and 239 to 259; these read VHIDSLFFSWFTGLIFLGIFY, IAPLALTIFCWVFLMNVMDLV, DVNITMAMALGVFALMIYYSI, LFGNMFAGEVVFILCAAMLPW, and AIFHILVITIQAFVFMMLTIV.

This sequence belongs to the ATPase A chain family. In terms of assembly, F-type ATPases have 2 components, CF(1) - the catalytic core - and CF(0) - the membrane proton channel. CF(1) has five subunits: alpha(3), beta(3), gamma(1), delta(1), epsilon(1). CF(0) has three main subunits: a(1), b(2) and c(9-12). The alpha and beta chains form an alternating ring which encloses part of the gamma chain. CF(1) is attached to CF(0) by a central stalk formed by the gamma and epsilon chains, while a peripheral stalk is formed by the delta and b chains.

The protein localises to the cell inner membrane. Functionally, key component of the proton channel; it plays a direct role in the translocation of protons across the membrane. The protein is ATP synthase subunit a of Vibrio alginolyticus.